Here is a 214-residue protein sequence, read N- to C-terminus: MRIILLGAPGAGKGTQAQFIMEKYGIPQISTGDMLRAAVKAGSELGKQAKAIMDAGKLVTDELVIALVKERIAQEDCHNGFLLDGFPRTIPQADAMKEAGINVDYVLEFAVPDELIVDRIIGRRVHPGSGRVYHVKFNPPQVEGKDDVTGEDLMTRKDDQEETVRKRLVEYHQQTAPLIGYYGQEAQAGNTRYVKIDGTQSVDSVRAELENVLG.

Residue Gly10–Thr15 participates in ATP binding. The NMP stretch occupies residues Ser30–Val59. Residues Thr31, Arg36, Lys57–Val59, Gly85–Arg88, and Gln92 each bind AMP. The interval Gly122 to Asp159 is LID. ATP-binding positions include Arg123 and Val132–Tyr133. Positions 156 and 167 each coordinate AMP. ATP is bound at residue Gln200.

This sequence belongs to the adenylate kinase family. In terms of assembly, monomer.

The protein resides in the cytoplasm. The catalysed reaction is AMP + ATP = 2 ADP. Its pathway is purine metabolism; AMP biosynthesis via salvage pathway; AMP from ADP: step 1/1. Its function is as follows. Catalyzes the reversible transfer of the terminal phosphate group between ATP and AMP. Plays an important role in cellular energy homeostasis and in adenine nucleotide metabolism. This chain is Adenylate kinase, found in Edwardsiella ictaluri (strain 93-146).